The primary structure comprises 328 residues: Malate dehydrogenase (328 aa).

11–17 (GAAGQIG) serves as a coordination point for NAD(+). Substrate is bound by residues R94 and R100. NAD(+)-binding positions include N107, Q114, and 131 to 133 (VGN). Substrate is bound by residues N133 and R164. H189 serves as the catalytic Proton acceptor.

The protein belongs to the LDH/MDH superfamily. MDH type 2 family.

It catalyses the reaction (S)-malate + NAD(+) = oxaloacetate + NADH + H(+). Its function is as follows. Catalyzes the reversible oxidation of malate to oxaloacetate. In Acinetobacter baumannii (strain SDF), this protein is Malate dehydrogenase.